The sequence spans 757 residues: RNA exonuclease 3 (757 aa).

Disordered regions lie at residues 56–259 (VKRE…AEHL) and 474–590 (ESLD…CDQA). Basic and acidic residues predominate over residues 120–132 (EGGRAEGAEKKEF). Composition is skewed to polar residues over residues 145–172 (TPHASATPQASVSPQTSAPPQHVSSSVS), 202–223 (QPSSSREPPVSSIDTRTSSSPK), and 230–240 (MTTSASPSQSR). 2 stretches are compositionally biased toward low complexity: residues 244-253 (RNTSASPSSS) and 474-502 (ESLDTSTSTSTSTSATTSAPSAKSTKTAS). The span at 503 to 516 (RPASTPTKSLTSSL) shows a compositional bias: polar residues. 2 stretches are compositionally biased toward basic and acidic residues: residues 543 to 557 (REPDITLETMKRGIG) and 565 to 581 (SQERSSEPRERSARVRE). In terms of domain architecture, Exonuclease spans 597-751 (VVAVDCEMLY…EDALAALDVV (155 aa)).

It belongs to the REXO1/REXO3 family.

The protein resides in the cytoplasm. It is found in the nucleus. In terms of biological role, 3' to 5' exoribonuclease required for proper 3' end maturation of MRP RNA and of the U5L snRNA. This Yarrowia lipolytica (strain CLIB 122 / E 150) (Yeast) protein is RNA exonuclease 3 (REX3).